Here is a 256-residue protein sequence, read N- to C-terminus: Trans-aconitate 2-methyltransferase (256 aa).

This sequence belongs to the methyltransferase superfamily. Tam family.

Its subcellular location is the cytoplasm. The catalysed reaction is trans-aconitate + S-adenosyl-L-methionine = (E)-3-(methoxycarbonyl)pent-2-enedioate + S-adenosyl-L-homocysteine. Its function is as follows. Catalyzes the S-adenosylmethionine monomethyl esterification of trans-aconitate. In Rhodopseudomonas palustris (strain HaA2), this protein is Trans-aconitate 2-methyltransferase.